An 800-amino-acid chain; its full sequence is Structural protein ORF800 (800 aa).

4 coiled-coil regions span residues 98–130 (AENI…YNLA), 447–475 (LLAE…ANNL), 514–567 (AINQ…ANNL), and 606–633 (AINQ…NLLA). The segment at 759-800 (AESIAESESETTESENNETTESTANSEGEKQEGEHGARLIRV) is disordered. A compositionally biased stretch (acidic residues) spans 761-776 (SIAESESETTESENNE). The span at 785–800 (EGEKQEGEHGARLIRV) shows a compositional bias: basic and acidic residues.

The protein localises to the virion. This chain is Structural protein ORF800, found in Acidianus convivator (ATV).